The primary structure comprises 508 residues: Hydroxymethylglutaryl-CoA synthase, mitochondrial (508 aa).

Residues 1–37 (MQRLLTPVRQVLRVKRAMQEASFMPPLLPPAAHQRFS) constitute a mitochondrion transit peptide. K52 is modified (N6-succinyllysine). (3S)-3-hydroxy-3-methylglutaryl-CoA contacts are provided by E80 and A81. Catalysis depends on E132, which acts as the Proton donor/acceptor. 3 residues coordinate (3S)-3-hydroxy-3-methylglutaryl-CoA: C166, N204, and T208. The active-site Acyl-thioester intermediate is the C166. Residue K243 is modified to N6-acetyllysine. Position 256 is an N6-acetyllysine; alternate (K256). At K256 the chain carries N6-succinyllysine; alternate. The (3S)-3-hydroxy-3-methylglutaryl-CoA site is built by S258 and H301. Catalysis depends on H301, which acts as the Proton donor/acceptor. K306 carries the N6-acetyllysine modification. A (3S)-3-hydroxy-3-methylglutaryl-CoA-binding site is contributed by K310. K310 bears the N6-acetyllysine; alternate mark. Residue K310 is modified to N6-succinyllysine; alternate. K333 carries the post-translational modification N6-succinyllysine. K342, K350, K354, and K358 each carry N6-acetyllysine; alternate. K342, K350, K354, and K358 each carry N6-succinyllysine; alternate. Positions 380 and 414 each coordinate (3S)-3-hydroxy-3-methylglutaryl-CoA. Residue S433 is modified to Phosphoserine. K437 is modified (N6-acetyllysine). Residues S440 and S456 each carry the phosphoserine modification. Residue K473 is modified to N6-acetyllysine; alternate. K473 carries the post-translational modification N6-succinyllysine; alternate.

Belongs to the thiolase-like superfamily. HMG-CoA synthase family. In terms of assembly, homodimer. In terms of processing, succinylated. Desuccinylated by SIRT5. Succinylation, at least at Lys-310, inhibits the enzymatic activity.

It is found in the mitochondrion. The enzyme catalyses acetoacetyl-CoA + acetyl-CoA + H2O = (3S)-3-hydroxy-3-methylglutaryl-CoA + CoA + H(+). Its pathway is metabolic intermediate biosynthesis; (R)-mevalonate biosynthesis; (R)-mevalonate from acetyl-CoA: step 2/3. Functionally, catalyzes the first irreversible step in ketogenesis, condensing acetyl-CoA to acetoacetyl-CoA to form HMG-CoA, which is converted by HMG-CoA reductase (HMGCR) into mevalonate. The chain is Hydroxymethylglutaryl-CoA synthase, mitochondrial (HMGCS2) from Sus scrofa (Pig).